Reading from the N-terminus, the 226-residue chain is ATP synthase F(0) complex subunit a (226 aa).

Transmembrane regions (helical) follow at residues 6 to 26 (FASF…IVLF), 68 to 88 (WTLM…LGLL), 97 to 117 (QLSM…ITGF), 138 to 158 (IPML…ALAV), 164 to 184 (ITAG…LMSI), and 200 to 222 (TILE…SLYL).

This sequence belongs to the ATPase A chain family. As to quaternary structure, component of the ATP synthase complex composed at least of ATP5F1A/subunit alpha, ATP5F1B/subunit beta, ATP5MC1/subunit c (homooctomer), MT-ATP6/subunit a, MT-ATP8/subunit 8, ATP5ME/subunit e, ATP5MF/subunit f, ATP5MG/subunit g, ATP5MK/subunit k, ATP5MJ/subunit j, ATP5F1C/subunit gamma, ATP5F1D/subunit delta, ATP5F1E/subunit epsilon, ATP5PF/subunit F6, ATP5PB/subunit b, ATP5PD/subunit d, ATP5PO/subunit OSCP. ATP synthase complex consists of a soluble F(1) head domain (subunits alpha(3) and beta(3)) - the catalytic core - and a membrane F(0) domain - the membrane proton channel (subunits c, a, 8, e, f, g, k and j). These two domains are linked by a central stalk (subunits gamma, delta, and epsilon) rotating inside the F1 region and a stationary peripheral stalk (subunits F6, b, d, and OSCP). Interacts with DNAJC30; interaction is direct.

It localises to the mitochondrion inner membrane. It catalyses the reaction H(+)(in) = H(+)(out). Functionally, subunit a, of the mitochondrial membrane ATP synthase complex (F(1)F(0) ATP synthase or Complex V) that produces ATP from ADP in the presence of a proton gradient across the membrane which is generated by electron transport complexes of the respiratory chain. ATP synthase complex consist of a soluble F(1) head domain - the catalytic core - and a membrane F(1) domain - the membrane proton channel. These two domains are linked by a central stalk rotating inside the F(1) region and a stationary peripheral stalk. During catalysis, ATP synthesis in the catalytic domain of F(1) is coupled via a rotary mechanism of the central stalk subunits to proton translocation. With the subunit c (ATP5MC1), forms the proton-conducting channel in the F(0) domain, that contains two crucial half-channels (inlet and outlet) that facilitate proton movement from the mitochondrial intermembrane space (IMS) into the matrix. Protons are taken up via the inlet half-channel and released through the outlet half-channel, following a Grotthuss mechanism. The protein is ATP synthase F(0) complex subunit a of Bos mutus grunniens (Wild yak).